The chain runs to 1026 residues: Multidrug resistance protein MdtC (1026 aa).

11 helical membrane-spanning segments follow: residues 15–35, 333–353, 360–380, 387–407, 431–451, 463–483, 528–548, 853–873, 897–917, 953–973, and 984–1004; these read ILIA…LPVA, EVEE…FLFL, LIPA…MYLC, LSLM…IVVL, VGFT…PLLL, FAVT…TLTP, LVGV…IAIP, LILI…LYES, LFNA…IGIV, PIMM…LSGG, and ITIV…TPVV.

The protein belongs to the resistance-nodulation-cell division (RND) (TC 2.A.6) family. MdtC subfamily. In terms of assembly, part of a tripartite efflux system composed of MdtA, MdtB and MdtC. MdtC forms a heteromultimer with MdtB.

It is found in the cell inner membrane. The chain is Multidrug resistance protein MdtC from Salmonella arizonae (strain ATCC BAA-731 / CDC346-86 / RSK2980).